A 237-amino-acid polypeptide reads, in one-letter code: uncharacterized protein (237 aa).

This is an uncharacterized protein from Dictyostelium discoideum (Social amoeba).